Consider the following 502-residue polypeptide: MSKDFILAVDQGTTSSRAIIFDKKGNIRKIAQKEFTQIYPKSGWVEHDAMEIWGTQSGVMREALEFGRVKPDQIAAIGITNQRETVVVWDKETGDPVYNAIVWQCRRTSSICDEIKRDPQFVKYIKENTGLVVDAYFSGTKVKWILDNVEGAREKANAGKLLMGTIDTWLIWNLTRGKVHATDYSNASRTMLFNINSLEWDKKILDYLNIPESMLPEVKNSSEVFGVTDSHTLGGAEIPIAGVAGDQHAALFGHCCFEKGMAKNTYGTGCFALMNVGDKPVYSDEGLLTTIAWAENGKPTYALEGSVFIAGAVIQWIRDGLGLVRSAEDSEYYATKIDSTNGVYLVPAFVGLGTPYWDMYARGTIVGITRDTKREHIIRAALEAIAYQAKDVLECMKEDTGLDLAGLRVDGGAVQNNFLMQFQSDILQSEISKPKVNEITGLGAVFLAGLAVGFWKDKQELKSILTTEKVFEPQKDSQAVAHDYRGWKKAVERSKAWAECYS.

Thr13 serves as a coordination point for ADP. Residues Thr13, Thr14, and Ser15 each contribute to the ATP site. Residue Thr13 coordinates sn-glycerol 3-phosphate. An ADP-binding site is contributed by Arg17. Arg83, Glu84, Tyr136, and Asp246 together coordinate sn-glycerol 3-phosphate. Residues Arg83, Glu84, Tyr136, Asp246, and Gln247 each coordinate glycerol. Residues Thr268 and Gly311 each coordinate ADP. Residues Thr268, Gly311, Gln315, and Gly412 each contribute to the ATP site. Residues Gly412 and Asn416 each contribute to the ADP site.

The protein belongs to the FGGY kinase family.

The enzyme catalyses glycerol + ATP = sn-glycerol 3-phosphate + ADP + H(+). Its pathway is polyol metabolism; glycerol degradation via glycerol kinase pathway; sn-glycerol 3-phosphate from glycerol: step 1/1. Its activity is regulated as follows. Inhibited by fructose 1,6-bisphosphate (FBP). Key enzyme in the regulation of glycerol uptake and metabolism. Catalyzes the phosphorylation of glycerol to yield sn-glycerol 3-phosphate. This is Glycerol kinase from Francisella tularensis subsp. tularensis (strain FSC 198).